Reading from the N-terminus, the 1435-residue chain is Cardiac-enriched FHL2-interacting protein (1435 aa).

Disordered regions lie at residues 109 to 176, 203 to 234, 250 to 270, and 291 to 311; these read EEKY…PPKF, SNTH…GSSS, FPSP…GTFL, and KDTA…DTTL. A Phosphothreonine modification is found at T120. Positions 133-147 are enriched in polar residues; sequence LRSSNKPVSKVSTLI. Residues 149–160 show a composition bias toward basic and acidic residues; that stretch reads SFDRTESQRCES. S323 carries the phosphoserine modification. Disordered stretches follow at residues 362-592, 609-772, 795-847, 1007-1108, 1138-1261, and 1363-1435; these read EGKA…LTLS, AERS…EKEN, SQGE…SPSS, PEGD…ARVT, SPRG…PGGP, and QGPR…EGIS. Basic and acidic residues predominate over residues 389–402; it reads KGKESLQDTLEEKT. S470 is modified (phosphoserine). 4 stretches are compositionally biased toward basic and acidic residues: residues 479–493, 522–535, 609–620, and 650–667; these read QEKE…DSYK, VLDE…DGKQ, AERSSYENKEVE, and CNRD…KTHQ. Positions 668 to 679 are enriched in polar residues; sequence LENGLSRSVSQE. Over residues 727–741 the composition is skewed to low complexity; it reads KFSTSSSDQSFASFD. Positions 751–772 are enriched in basic and acidic residues; the sequence is NQREDRRKDVSAGDSQKDEKEN. At S816 the chain carries Phosphoserine. The segment covering 831 to 847 has biased composition (polar residues); the sequence is KGTTFSQAKDLTPSPSS. The segment covering 1055–1066 has biased composition (low complexity); sequence NSPNPGSPGESS. A compositionally biased stretch (polar residues) spans 1067–1082; sequence ACSPAASNIWEESSQA. Positions 1083–1093 are enriched in low complexity; the sequence is PGGPELLPEEP. A compositionally biased stretch (polar residues) spans 1094–1105; the sequence is NQASPWASSSPA. A compositionally biased stretch (basic residues) spans 1182 to 1193; sequence RRAKKLASKRRK. A compositionally biased stretch (basic and acidic residues) spans 1194-1211; it reads TDQAQEKHGESQEGKPCP. Over residues 1424 to 1435 the composition is skewed to acidic residues; sequence DDLEDFATEGIS.

In terms of assembly, interacts with FHL2. Expressed in the heart and skeletal muscle.

The protein resides in the cytoplasm. The protein localises to the myofibril. Its subcellular location is the sarcomere. It localises to the z line. In terms of biological role, plays an important role in cardiomyocyte hypertrophy via activation of the calcineurin/NFAT signaling pathway. The protein is Cardiac-enriched FHL2-interacting protein of Homo sapiens (Human).